Reading from the N-terminus, the 727-residue chain is Centrosomal protein kizuna (727 aa).

The segment at 1–20 (MTERSGRGGGTRGASALPSP) is disordered. A coiled-coil region spans residues 77-124 (KNARIRNQEYLKQFERIQANITASLEKLQELKIEFETQIKKMQLLSKD). Disordered regions lie at residues 176–226 (DFTT…NKSD), 271–456 (EGKK…FTNL), and 564–727 (RLAV…PRTP). Polar residues predominate over residues 198-223 (HQQTAQSSDVTGSRVVQTPGDTQCLN). A compositionally biased stretch (basic and acidic residues) spans 286–324 (LSPENRTTDLKCDSSRRSEGSEGEILTREHIEVEEERAR). At Ser-328 the chain carries Phosphoserine. The span at 343–359 (PQEKPPARKASSDHLPC) shows a compositional bias: basic and acidic residues. The segment covering 380–390 (LSSSSDLTVSV) has biased composition (low complexity). Thr-387 bears the Phosphothreonine; by PLK1 mark. A compositionally biased stretch (polar residues) spans 442–455 (APSTPDSPNESFTN). Low complexity predominate over residues 569-583 (SSKSSCSLPSTPSDE). Acidic residues predominate over residues 603-613 (QEDESREESTE). Residues 631-642 (LKQSALQGSTHQ) show a composition bias toward polar residues. Low complexity-rich tracts occupy residues 659–669 (GLKTGSGTFKT) and 677–689 (SEAS…GSPL). A phosphoserine mark is found at Ser-711, Ser-714, and Ser-716.

It belongs to the kizuna family. Interacts with AKAP9, CEP72, ODF2, PCNT and TUBGCP2. In terms of processing, phosphorylation at Thr-387 by PLK1 is not needed for centrosomal localization or pericentriolar material expansion but is indispensable for spindle-pole stabilization.

It localises to the cytoplasm. Its subcellular location is the cytoskeleton. The protein resides in the microtubule organizing center. The protein localises to the centrosome. It is found in the cilium basal body. Centrosomal protein required for establishing a robust mitotic centrosome architecture that can endure the forces that converge on the centrosomes during spindle formation. Required for stabilizing the expanded pericentriolar material around the centriole. The protein is Centrosomal protein kizuna (KIZ) of Bos taurus (Bovine).